An 831-amino-acid chain; its full sequence is Multiphosphoryl transfer protein (831 aa).

In terms of domain architecture, HPr spans 1-90 (MLTIQFLCPL…EYIQVRFIDS (90 aa)). Histidine 15 functions as the Pros-phosphohistidine intermediate; for HPr activity in the catalytic mechanism. A Phosphohistidine; by EI modification is found at histidine 15. A PTS EI region spans residues 119-650 (GNVLASGVGV…AVKSQLRQLD (532 aa)). The Tele-phosphohistidine intermediate; for PTS EI activity role is filled by histidine 298. A Phosphohistidine; by autocatalysis modification is found at histidine 298. Phosphoenolpyruvate contacts are provided by arginine 405 and arginine 441. Mg(2+) contacts are provided by glutamate 540 and aspartate 564. Residues 563-564 (ND) and arginine 574 each bind phosphoenolpyruvate. Cysteine 611 functions as the Proton donor; for EI activity in the catalytic mechanism. In terms of domain architecture, PTS EIIA type-2 spans 685-828 (PLLALENIFV…QSILTLLETE (144 aa)). The Tele-phosphohistidine intermediate; for PTS EIIA activity role is filled by histidine 747. Histidine 747 is subject to Phosphohistidine; by HPr.

Belongs to the PEP-utilizing enzyme family. Mg(2+) is required as a cofactor.

Its subcellular location is the cytoplasm. The enzyme catalyses L-histidyl-[protein] + phosphoenolpyruvate = N(pros)-phospho-L-histidyl-[protein] + pyruvate. It catalyses the reaction D-fructose(out) + N(pros)-phospho-L-histidyl-[protein] = D-fructose 1-phosphate(in) + L-histidyl-[protein]. In terms of biological role, multifunctional protein that includes general (non sugar-specific) and sugar-specific components of the phosphoenolpyruvate-dependent sugar phosphotransferase system (sugar PTS). This major carbohydrate active transport system catalyzes the phosphorylation of incoming sugar substrates concomitantly with their translocation across the cell membrane. The enzyme II FryABC PTS system is involved in fructose transport. This is Multiphosphoryl transfer protein (fryA) from Escherichia coli O157:H7.